The primary structure comprises 306 residues: Pantothenate kinase (306 aa).

90–97 (GSVAVGKS) lines the ATP pocket.

This sequence belongs to the prokaryotic pantothenate kinase family.

It localises to the cytoplasm. The enzyme catalyses (R)-pantothenate + ATP = (R)-4'-phosphopantothenate + ADP + H(+). The protein operates within cofactor biosynthesis; coenzyme A biosynthesis; CoA from (R)-pantothenate: step 1/5. The protein is Pantothenate kinase (coaA) of Lactococcus lactis subsp. lactis (strain IL1403) (Streptococcus lactis).